The following is a 254-amino-acid chain: Caffeoyl-CoA O-methyltransferase (254 aa).

The tract at residues 1-25 is disordered; the sequence is MATTNVEENKQTQEQQPKEIKHQEV. Residues 7–25 show a composition bias toward basic and acidic residues; sequence EENKQTQEQQPKEIKHQEV. K28 lines the substrate pocket. S-adenosyl-L-methionine is bound by residues T70, E92, 94–95, S100, D118, and A147; that span reads GV. D170 provides a ligand contact to substrate. D170 serves as a coordination point for a divalent metal cation. D172 serves as a coordination point for S-adenosyl-L-methionine. The a divalent metal cation site is built by D196 and N197. N201 is a binding site for substrate.

The protein belongs to the class I-like SAM-binding methyltransferase superfamily. Cation-dependent O-methyltransferase family. CCoAMT subfamily. A divalent metal cation is required as a cofactor.

The enzyme catalyses (E)-caffeoyl-CoA + S-adenosyl-L-methionine = (E)-feruloyl-CoA + S-adenosyl-L-homocysteine + H(+). Its pathway is aromatic compound metabolism; phenylpropanoid biosynthesis. In terms of biological role, methylates caffeoyl-CoA to feruloyl-CoA and 5-hydroxyferuloyl-CoA to sinapoyl-CoA. Plays a role in the synthesis of feruloylated polysaccharides. Involved in the reinforcement of the plant cell wall. Also involved in the responding to wounding or pathogen challenge by the increased formation of cell wall-bound ferulic acid polymers. The polypeptide is Caffeoyl-CoA O-methyltransferase (Mesembryanthemum crystallinum (Common ice plant)).